The following is a 600-amino-acid chain: Aspartate--tRNA(Asp/Asn) ligase (600 aa).

An L-aspartate-binding site is contributed by glutamate 174. The tract at residues 198-201 is aspartate; sequence QLFK. Arginine 220 lines the L-aspartate pocket. ATP contacts are provided by residues 220–222 and glutamine 229; that span reads RDE. Histidine 457 provides a ligand contact to L-aspartate. Glutamate 491 contributes to the ATP binding site. L-aspartate is bound at residue arginine 498. Residue 543-546 participates in ATP binding; it reads GLDR.

This sequence belongs to the class-II aminoacyl-tRNA synthetase family. Type 1 subfamily. As to quaternary structure, homodimer.

The protein resides in the cytoplasm. The enzyme catalyses tRNA(Asx) + L-aspartate + ATP = L-aspartyl-tRNA(Asx) + AMP + diphosphate. Aspartyl-tRNA synthetase with relaxed tRNA specificity since it is able to aspartylate not only its cognate tRNA(Asp) but also tRNA(Asn). Reaction proceeds in two steps: L-aspartate is first activated by ATP to form Asp-AMP and then transferred to the acceptor end of tRNA(Asp/Asn). This chain is Aspartate--tRNA(Asp/Asn) ligase, found in Burkholderia mallei (strain NCTC 10247).